The sequence spans 174 residues: Adenine phosphoribosyltransferase (174 aa).

Belongs to the purine/pyrimidine phosphoribosyltransferase family. In terms of assembly, homodimer.

The protein localises to the cytoplasm. The catalysed reaction is AMP + diphosphate = 5-phospho-alpha-D-ribose 1-diphosphate + adenine. Its pathway is purine metabolism; AMP biosynthesis via salvage pathway; AMP from adenine: step 1/1. In terms of biological role, catalyzes a salvage reaction resulting in the formation of AMP, that is energically less costly than de novo synthesis. This chain is Adenine phosphoribosyltransferase, found in Phocaeicola vulgatus (strain ATCC 8482 / DSM 1447 / JCM 5826 / CCUG 4940 / NBRC 14291 / NCTC 11154) (Bacteroides vulgatus).